The sequence spans 199 residues: Acireductone dioxygenase 3 (199 aa).

Positions 99, 101, 105, and 144 each coordinate Fe(2+). Ni(2+) is bound by residues H99, H101, E105, and H144.

It belongs to the acireductone dioxygenase (ARD) family. The cofactor is Fe(2+). Ni(2+) is required as a cofactor.

It is found in the cytoplasm. Its subcellular location is the nucleus. The catalysed reaction is 1,2-dihydroxy-5-(methylsulfanyl)pent-1-en-3-one + O2 = 4-methylsulfanyl-2-oxobutanoate + formate + 2 H(+). It carries out the reaction 1,2-dihydroxy-5-(methylsulfanyl)pent-1-en-3-one + O2 = 3-(methylsulfanyl)propanoate + CO + formate + 2 H(+). Its pathway is amino-acid biosynthesis; L-methionine biosynthesis via salvage pathway; L-methionine from S-methyl-5-thio-alpha-D-ribose 1-phosphate: step 5/6. Functionally, catalyzes 2 different reactions between oxygen and the acireductone 1,2-dihydroxy-3-keto-5-methylthiopentene (DHK-MTPene) depending upon the metal bound in the active site. Fe-containing acireductone dioxygenase (Fe-ARD) produces formate and 2-keto-4-methylthiobutyrate (KMTB), the alpha-ketoacid precursor of methionine in the methionine recycle pathway. Ni-containing acireductone dioxygenase (Ni-ARD) produces methylthiopropionate, carbon monoxide and formate, and does not lie on the methionine recycle pathway. The polypeptide is Acireductone dioxygenase 3 (ARD3) (Arabidopsis thaliana (Mouse-ear cress)).